Here is a 284-residue protein sequence, read N- to C-terminus: RNase adapter protein RapZ (284 aa).

8-15 (GRSGSGKS) serves as a coordination point for ATP. Position 56–59 (56–59 (DVRN)) interacts with GTP. Positions 266-284 (RSRGKNVQSRHRTLEKRKP) are RNA-binding.

The protein belongs to the RapZ-like family. RapZ subfamily. In terms of assembly, homotrimer.

Its function is as follows. Modulates the synthesis of GlmS, by affecting the processing and stability of the regulatory small RNA GlmZ. When glucosamine-6-phosphate (GlcN6P) concentrations are high in the cell, RapZ binds GlmZ and targets it to cleavage by RNase E. Consequently, GlmZ is inactivated and unable to activate GlmS synthesis. Under low GlcN6P concentrations, RapZ is sequestered and inactivated by an other regulatory small RNA, GlmY, preventing GlmZ degradation and leading to synthesis of GlmS. This chain is RNase adapter protein RapZ, found in Escherichia coli O1:K1 / APEC.